Consider the following 128-residue polypeptide: MYCQDSNICAVFAVQGGKVGRKHGIKRGRRPSIRSPAQRARGPWIHESKHPAFAKQQINLEMPNSRATTELAWVCSSTSRKKKWARSLTLSTAPLSPPPSLVHCEDCSCLPGCHSGDLYNLAPAERTC.

Over residues 22-32 (KHGIKRGRRPS) the composition is skewed to basic residues. The disordered stretch occupies residues 22-42 (KHGIKRGRRPSIRSPAQRARG).

In Homo sapiens (Human), this protein is Putative protein SEM1, isoform 2.